Here is a 218-residue protein sequence, read N- to C-terminus: Glutathione S-transferase Mu 2 (218 aa).

The GST N-terminal domain maps to Pro-2 to Gly-88. Tyr-7–Trp-8 lines the glutathione pocket. A phosphoserine mark is found at Ser-27 and Ser-44. Glutathione-binding positions include Arg-43–Trp-46, Lys-50, Asn-59–Leu-60, and Gln-72–Ser-73. The GST C-terminal domain occupies Ser-90–Val-208. Residue Tyr-116 coordinates substrate.

This sequence belongs to the GST superfamily. Mu family. Homodimer. As to expression, muscle.

Its subcellular location is the cytoplasm. The enzyme catalyses RX + glutathione = an S-substituted glutathione + a halide anion + H(+). It carries out the reaction 11(S)-hydroxy-14(S),15(S)-epoxy-(5Z,8Z,12E)-eicosatrienoate + glutathione = (11S,15S)-dihydroxy-14(R)-S-glutathionyl-(5Z,8Z,12E)-eicosatrienoate. Functionally, conjugation of reduced glutathione to a wide number of exogenous and endogenous hydrophobic electrophiles. Participates in the formation of novel hepoxilin regioisomers. In Homo sapiens (Human), this protein is Glutathione S-transferase Mu 2.